A 745-amino-acid chain; its full sequence is Catalase-peroxidase (745 aa).

Positions 97–223 (WHSAGTYRTG…LAAVQMGLIY (127 aa)) form a cross-link, tryptophyl-tyrosyl-methioninium (Trp-Tyr) (with M-249). The active-site Proton acceptor is the His-98. Positions 223-249 (YVNPEGPDGSPDPWASARDIRMTFARM) form a cross-link, tryptophyl-tyrosyl-methioninium (Tyr-Met) (with W-97). Residue His-264 coordinates heme b. Residues 345-368 (KQWQPVNPKPEDLAPGAHSPDRRV) are disordered.

The protein belongs to the peroxidase family. Peroxidase/catalase subfamily. Homodimer or homotetramer. Requires heme b as cofactor. In terms of processing, formation of the three residue Trp-Tyr-Met cross-link is important for the catalase, but not the peroxidase activity of the enzyme.

The catalysed reaction is H2O2 + AH2 = A + 2 H2O. It carries out the reaction 2 H2O2 = O2 + 2 H2O. Its function is as follows. Bifunctional enzyme with both catalase and broad-spectrum peroxidase activity. In Phenylobacterium zucineum (strain HLK1), this protein is Catalase-peroxidase.